A 198-amino-acid polypeptide reads, in one-letter code: Transcriptional regulator GfcR (198 aa).

It belongs to the purine/pyrimidine phosphoribosyltransferase family. GfcR subfamily.

This Methanocorpusculum labreanum (strain ATCC 43576 / DSM 4855 / Z) protein is Transcriptional regulator GfcR.